The primary structure comprises 106 residues: MYAIVENGGKQYKVEVGHLLHTEKMNGVAQGDKVVLDKVVLVKTDDGKVLVGKPYLTNVTITGIVVEHARARKILVGQFIPRKGHKTIKGHRQWYTTIKIENIEIK.

Belongs to the bacterial ribosomal protein bL21 family. In terms of assembly, part of the 50S ribosomal subunit. Contacts protein L20.

In terms of biological role, this protein binds to 23S rRNA in the presence of protein L20. This Fervidobacterium nodosum (strain ATCC 35602 / DSM 5306 / Rt17-B1) protein is Large ribosomal subunit protein bL21.